The following is a 65-amino-acid chain: VESP-VB1 (65 aa).

The N-terminal stretch at 1 to 23 is a signal peptide; it reads MKMSILFLFALIASLACLQLTFA. 7 AXPX repeats span residues 23 to 26, 27 to 30, 31 to 34, 35 to 38, 39 to 42, 43 to 46, and 47 to 50; these read AAPA, ASPL, ANPG, ASPE, AAPL, ADPL, and ADPF. Positions 24 to 49 are excised as a propeptide; that stretch reads APAASPLANPGASPEAAPLADPLADP. Leu62 bears the Leucine amide mark.

In terms of tissue distribution, expressed by the venom gland.

Its subcellular location is the secreted. Its function is as follows. Antimicrobial peptide. Shows activity against both Gram-positive (S.aureus MIC=1.0-3.75 ug/ml) and -negative (E.coli MIC=7.5-15 ug/ml) bacteria, as well against fungi (C.albicans MIC=30 ug/ml). Also promotes important mast cell degranulation. Shows little hemolytic activity on rabbit and human erythrocytes. Its mast cell degranulation activity may be related to the activation of G-protein coupled receptors in mast cells as well as interaction with other proteins located in cell endosomal membranes in the mast cells. The sequence is that of VESP-VB1 from Vespa bicolor (Black shield wasp).